Reading from the N-terminus, the 101-residue chain is Small ribosomal subunit protein uS14 (101 aa).

It belongs to the universal ribosomal protein uS14 family. As to quaternary structure, part of the 30S ribosomal subunit. Contacts proteins S3 and S10.

Its function is as follows. Binds 16S rRNA, required for the assembly of 30S particles and may also be responsible for determining the conformation of the 16S rRNA at the A site. The protein is Small ribosomal subunit protein uS14 of Aliivibrio salmonicida (strain LFI1238) (Vibrio salmonicida (strain LFI1238)).